The following is a 242-amino-acid chain: MDEIKPKKEENSKRRRNVKPICRETGDHVHYLPTCKTKPKPTRTHHAPPPILDSIFKVTHKPHYYECRKNHAADIGTTAYDGCGEFVSSTGEEDSLNCAACGCHRNFHREELIPENGGVTETVLEVLKISSCQFRRIFCSPYGGGKSEGKKKKKEKESYGGDPIIKDRFGGAEEEEGIVKRLKTKFTAEQTEKMRDYAEKLRWKVRPERQEEVEEFCVEIGVNRKNFRIWMNNHKDKIIIDE.

A ZF-HD dimerization-type; degenerate zinc finger spans residues 64–111 (YYECRKNHAADIGTTAYDGCGEFVSSTGEEDSLNCAACGCHRNFHREE). Residues 144–166 (GGKSEGKKKKKEKESYGGDPIIK) form a disordered region. Basic and acidic residues predominate over residues 155–166 (EKESYGGDPIIK). Residues 179 to 238 (VKRLKTKFTAEQTEKMRDYAEKLRWKVRPERQEEVEEFCVEIGVNRKNFRIWMNNHKDKI) constitute a DNA-binding region (homeobox).

Homo- and heterodimer with other ZFHD proteins. Interacts with MIF1, MIF2 and MIF3; these interactions prevent nuclear localization and DNA-binding to inhibit transcription regulation activity. Binds to ZHD11. Mostly expressed in flowers.

It localises to the nucleus. Its function is as follows. Putative transcription factor. In Arabidopsis thaliana (Mouse-ear cress), this protein is Zinc-finger homeodomain protein 13 (ZHD13).